Reading from the N-terminus, the 321-residue chain is Serpentine receptor class delta-63 (321 aa).

A run of 7 helical transmembrane segments spans residues 14 to 34 (LVYM…YNFT), 41 to 61 (VKYF…MAFA), 83 to 103 (YIGP…GIVV), 128 to 148 (LWTL…IVII), 190 to 208 (AAMS…GTYW), 240 to 260 (NFQI…YFMI), and 273 to 293 (TITV…IYFI).

It belongs to the nematode receptor-like protein srd family.

The protein localises to the membrane. This is Serpentine receptor class delta-63 (srd-63) from Caenorhabditis elegans.